A 399-amino-acid polypeptide reads, in one-letter code: S-adenosylmethionine synthase (399 aa).

ATP is bound at residue His17. Residue Asp19 coordinates Mg(2+). Residue Glu45 participates in K(+) binding. L-methionine-binding residues include Glu58 and Gln101. The interval 101 to 111 is flexible loop; sequence QSADIAMGVDQ. ATP is bound by residues 177 to 179, 244 to 245, Asp253, 259 to 260, Ala276, and Lys280; these read DGK, RF, and RK. Asp253 provides a ligand contact to L-methionine. Lys284 serves as a coordination point for L-methionine.

This sequence belongs to the AdoMet synthase family. Homotetramer; dimer of dimers. Mg(2+) serves as cofactor. The cofactor is K(+).

It is found in the cytoplasm. The catalysed reaction is L-methionine + ATP + H2O = S-adenosyl-L-methionine + phosphate + diphosphate. Its pathway is amino-acid biosynthesis; S-adenosyl-L-methionine biosynthesis; S-adenosyl-L-methionine from L-methionine: step 1/1. Its function is as follows. Catalyzes the formation of S-adenosylmethionine (AdoMet) from methionine and ATP. The overall synthetic reaction is composed of two sequential steps, AdoMet formation and the subsequent tripolyphosphate hydrolysis which occurs prior to release of AdoMet from the enzyme. This chain is S-adenosylmethionine synthase, found in Bacillus mycoides (strain KBAB4) (Bacillus weihenstephanensis).